The sequence spans 100 residues: Aspartyl/glutamyl-tRNA(Asn/Gln) amidotransferase subunit C (100 aa).

It belongs to the GatC family. Heterotrimer of A, B and C subunits.

The catalysed reaction is L-glutamyl-tRNA(Gln) + L-glutamine + ATP + H2O = L-glutaminyl-tRNA(Gln) + L-glutamate + ADP + phosphate + H(+). The enzyme catalyses L-aspartyl-tRNA(Asn) + L-glutamine + ATP + H2O = L-asparaginyl-tRNA(Asn) + L-glutamate + ADP + phosphate + 2 H(+). In terms of biological role, allows the formation of correctly charged Asn-tRNA(Asn) or Gln-tRNA(Gln) through the transamidation of misacylated Asp-tRNA(Asn) or Glu-tRNA(Gln) in organisms which lack either or both of asparaginyl-tRNA or glutaminyl-tRNA synthetases. The reaction takes place in the presence of glutamine and ATP through an activated phospho-Asp-tRNA(Asn) or phospho-Glu-tRNA(Gln). This Streptococcus pyogenes serotype M49 (strain NZ131) protein is Aspartyl/glutamyl-tRNA(Asn/Gln) amidotransferase subunit C.